We begin with the raw amino-acid sequence, 135 residues long: Endocuticle structural glycoprotein SgAbd-2 (135 aa).

A Pyrrolidone carboxylic acid modification is found at Gln-1. O-linked (HexNAc...) threonine glycans are attached at residues Thr-11 and Thr-100. Positions 32–102 (DGSYAYSYQT…AEGAHLPTPP (71 aa)) constitute a Chitin-binding type R&amp;R domain.

Functionally, component of the abdominal endocuticle. The sequence is that of Endocuticle structural glycoprotein SgAbd-2 from Schistocerca gregaria (Desert locust).